The primary structure comprises 151 residues: Cytochrome c-type biogenesis protein CcmE (151 aa).

Residues 1–9 (MKGLKKKRR) are Cytoplasmic-facing. The helical; Signal-anchor for type II membrane protein transmembrane segment at 10–30 (IQIIALAFVALAGSTALIGYA) threads the bilayer. The Periplasmic portion of the chain corresponds to 31-151 (MRDGINFFRS…FQHTEDQPQG (121 aa)). Heme-binding residues include His123 and Tyr127.

It belongs to the CcmE/CycJ family.

Its subcellular location is the cell inner membrane. Its function is as follows. Heme chaperone required for the biogenesis of c-type cytochromes. Transiently binds heme delivered by CcmC and transfers the heme to apo-cytochromes in a process facilitated by CcmF and CcmH. This Cereibacter sphaeroides (strain ATCC 17029 / ATH 2.4.9) (Rhodobacter sphaeroides) protein is Cytochrome c-type biogenesis protein CcmE.